The following is a 520-amino-acid chain: Nonsense-mediated mRNA decay factor SMG9 (520 aa).

3 disordered regions span residues 1-94 (MSES…PAPL), 108-143 (KGPV…QRPT), and 341-360 (KPST…SDEG). S2 is modified (N-acetylserine). A phosphoserine mark is found at S2, S4, S7, S32, and S53. Positions 36–53 (GRERDYIAPWERERRDAS) are enriched in basic and acidic residues. Pro residues-rich tracts occupy residues 78–94 (QPPP…PAPL) and 122–133 (TAPPPPAAPAPP). A compositionally biased stretch (low complexity) spans 342–357 (PSTPSPSHESSSSSGS). At S451 the chain carries Phosphoserine.

The protein belongs to the SMG9 family. As to quaternary structure, self-associates to form homodimers and forms heterodimers with SMG8; these assembly forms may represent SMG1C intermediate forms. Component of the SMG1C complex composed of SMG1, SMG8 and SMG9. Interacts with DHX34; the interaction is RNA-independent. Phosphorylated by SMG1.

Functionally, involved in nonsense-mediated decay (NMD) of mRNAs containing premature stop codons. Is recruited by release factors to stalled ribosomes together with SMG1 and SMG8 (forming the SMG1C protein kinase complex) and, in the SMG1C complex, is required for the efficient association between SMG1 and SMG8. Plays a role in brain, heart, and eye development. This chain is Nonsense-mediated mRNA decay factor SMG9, found in Homo sapiens (Human).